Reading from the N-terminus, the 751-residue chain is 1,3-beta-galactosyl-N-acetylhexosamine phosphorylase (751 aa).

The active-site Proton donor is the aspartate 313.

This sequence belongs to the glycoside hydrolase 112 family. Homodimer.

It carries out the reaction beta-D-galactosyl-(1-&gt;3)-N-acetyl-D-glucosamine + phosphate = alpha-D-galactose 1-phosphate + N-acetyl-D-glucosamine. Reversibly phosphorolyzes lacto-N-biose to Gal1-P and N-acetylglucosamine (GlcNAc) and galacto-N-biose to Gal1-P and N-acetylgalactosamine (GalNAc). Involved in the lacto-N-biose I/galacto-N-biose (LNB/GNB) degradation pathway, which is important for host intestinal colonization by bifidobacteria. The protein is 1,3-beta-galactosyl-N-acetylhexosamine phosphorylase (lnpA) of Bifidobacterium longum subsp. longum (strain ATCC 15707 / DSM 20219 / JCM 1217 / NCTC 11818 / E194b).